The sequence spans 876 residues: Vacuolar protein sorting-associated protein 39 homolog (876 aa).

The region spanning 14 to 310 (GVQIESIAAY…KFLVHADKGT (297 aa)) is the CNH domain. A CHCR repeat occupies 578–741 (ELIEVESLPR…ILIPPTQPLY (164 aa)).

This sequence belongs to the VAM6/VPS39 family. In terms of assembly, part of the homotypic fusion and vacuole protein sorting (HOPS) complex, composed of Vps16A, car/Vps33A, dor/Vps18, Vps39, Vps11 and lt/Vps41. Interacts with Rab2 (GTP-bound form); the interaction is probably direct.

The protein resides in the cytoplasm. It is found in the lysosome membrane. Its subcellular location is the late endosome membrane. The protein localises to the late endosome. It localises to the lysosome. Functionally, part of the homotypic fusion and vacuole protein sorting (HOPS) tethering complex involved in endo-lysosomal vesicle trafficking and lysosome biogenesis. The HOPS complex facilitates docking and fusion of lysosomes with late endosomes and several other types of vesicles. The HOPS complex is also involved in autophagy and crinophagy (the elimination of unused secretory granules through their fusion with lysosomes). The HOPS complex mediates autophagocitic flux, probably by binding autophagosome-associated Syx17/syntaxin 17, promoting assembly of the trans-SNARE complex and instigating autophagosome-lysosome fusion. Independent of Syx17/syntaxin 17, HOPS is involved in biosynthetic transport to lysosomes and lysosome-related organelles such as eye-pigment granules. Required for autophagocytosis-dependent remodeling of myofibrils and transverse-tubules (T-tubules) during metamorphosis. This is Vacuolar protein sorting-associated protein 39 homolog from Drosophila melanogaster (Fruit fly).